Reading from the N-terminus, the 206-residue chain is dITP/XTP pyrophosphatase (206 aa).

Substrate is bound at residue 7-12 (TSNKDK). Asp-74 functions as the Proton acceptor in the catalytic mechanism. Position 74 (Asp-74) interacts with Mg(2+). Residues Ser-75, 159-162 (FGYD), Lys-182, and 187-188 (HR) each bind substrate.

The protein belongs to the HAM1 NTPase family. As to quaternary structure, homodimer. It depends on Mg(2+) as a cofactor.

The catalysed reaction is XTP + H2O = XMP + diphosphate + H(+). It catalyses the reaction dITP + H2O = dIMP + diphosphate + H(+). The enzyme catalyses ITP + H2O = IMP + diphosphate + H(+). Pyrophosphatase that catalyzes the hydrolysis of nucleoside triphosphates to their monophosphate derivatives, with a high preference for the non-canonical purine nucleotides XTP (xanthosine triphosphate), dITP (deoxyinosine triphosphate) and ITP. Seems to function as a house-cleaning enzyme that removes non-canonical purine nucleotides from the nucleotide pool, thus preventing their incorporation into DNA/RNA and avoiding chromosomal lesions. This Campylobacter hominis (strain ATCC BAA-381 / DSM 21671 / CCUG 45161 / LMG 19568 / NCTC 13146 / CH001A) protein is dITP/XTP pyrophosphatase.